Consider the following 491-residue polypeptide: Aspartyl/glutamyl-tRNA(Asn/Gln) amidotransferase subunit B (491 aa).

The protein belongs to the GatB/GatE family. GatB subfamily. In terms of assembly, heterotrimer of A, B and C subunits.

The catalysed reaction is L-glutamyl-tRNA(Gln) + L-glutamine + ATP + H2O = L-glutaminyl-tRNA(Gln) + L-glutamate + ADP + phosphate + H(+). It carries out the reaction L-aspartyl-tRNA(Asn) + L-glutamine + ATP + H2O = L-asparaginyl-tRNA(Asn) + L-glutamate + ADP + phosphate + 2 H(+). In terms of biological role, allows the formation of correctly charged Asn-tRNA(Asn) or Gln-tRNA(Gln) through the transamidation of misacylated Asp-tRNA(Asn) or Glu-tRNA(Gln) in organisms which lack either or both of asparaginyl-tRNA or glutaminyl-tRNA synthetases. The reaction takes place in the presence of glutamine and ATP through an activated phospho-Asp-tRNA(Asn) or phospho-Glu-tRNA(Gln). This Burkholderia ambifaria (strain ATCC BAA-244 / DSM 16087 / CCUG 44356 / LMG 19182 / AMMD) (Burkholderia cepacia (strain AMMD)) protein is Aspartyl/glutamyl-tRNA(Asn/Gln) amidotransferase subunit B.